The primary structure comprises 190 residues: ATP synthase subunit b, chloroplastic (190 aa).

Residues 35–55 traverse the membrane as a helical segment; the sequence is LSVVLGVLIFFGKGVCASCLL.

This sequence belongs to the ATPase B chain family. In terms of assembly, F-type ATPases have 2 components, F(1) - the catalytic core - and F(0) - the membrane proton channel. F(1) has five subunits: alpha(3), beta(3), gamma(1), delta(1), epsilon(1). F(0) has four main subunits: a(1), b(1), b'(1) and c(10-14). The alpha and beta chains form an alternating ring which encloses part of the gamma chain. F(1) is attached to F(0) by a central stalk formed by the gamma and epsilon chains, while a peripheral stalk is formed by the delta, b and b' chains.

It is found in the plastid. Its subcellular location is the chloroplast thylakoid membrane. Its function is as follows. F(1)F(0) ATP synthase produces ATP from ADP in the presence of a proton or sodium gradient. F-type ATPases consist of two structural domains, F(1) containing the extramembraneous catalytic core and F(0) containing the membrane proton channel, linked together by a central stalk and a peripheral stalk. During catalysis, ATP synthesis in the catalytic domain of F(1) is coupled via a rotary mechanism of the central stalk subunits to proton translocation. Functionally, component of the F(0) channel, it forms part of the peripheral stalk, linking F(1) to F(0). This Coffea arabica (Arabian coffee) protein is ATP synthase subunit b, chloroplastic.